The primary structure comprises 335 residues: Mycobacterial beta-ketoacyl-[acyl-carrier-protein] synthase III (335 aa).

Residues Cys-122 and His-258 contribute to the active site. Residues 259–263 are ACP-binding; sequence QANSR. Asn-289 is an active-site residue.

It belongs to the thiolase-like superfamily. FabH family. In terms of assembly, homodimer.

It is found in the cytoplasm. The catalysed reaction is malonyl-[ACP] + dodecanoyl-CoA + H(+) = 3-oxotetradecanoyl-[ACP] + CO2 + CoA. It functions in the pathway lipid metabolism; fatty acid biosynthesis. The protein operates within lipid metabolism; mycolic acid biosynthesis. Functionally, catalyzes the condensation reaction of fatty acid synthesis by the addition to an acyl acceptor of two carbons from malonyl-ACP. Catalyzes the first condensation reaction which initiates fatty acid synthesis and may therefore play a role in governing the total rate of fatty acid production. Possesses both acetoacetyl-ACP synthase and acetyl transacylase activities. Its substrate specificity determines the biosynthesis of branched-chain and/or straight-chain of fatty acids. This is Mycobacterial beta-ketoacyl-[acyl-carrier-protein] synthase III from Mycobacterium avium (strain 104).